A 391-amino-acid chain; its full sequence is Casein kinase II subunit alpha (391 aa).

The interaction with beta subunit stretch occupies residues 36–41; it reads QDDYQL. In terms of domain architecture, Protein kinase spans 39-324; sequence YQLVRKLGRG…AREAMEHPYF (286 aa). ATP contacts are provided by residues 45 to 53 and K68; that span reads LGRGKYSEV. D156 functions as the Proton acceptor in the catalytic mechanism. Residues T344 and T360 each carry the phosphothreonine; by CDK1 modification. Residues S362 and S370 each carry the phosphoserine; by CDK1 modification.

The protein belongs to the protein kinase superfamily. Ser/Thr protein kinase family. CK2 subfamily. In terms of assembly, heterotetramer composed of two catalytic subunits (alpha chain and/or alpha' chain) and two regulatory subunits (beta chains). The tetramer can exist as a combination of 2 alpha/2 beta, 2 alpha'/2 beta or 1 alpha/1 alpha'/2 beta subunits. Also part of a CK2-SPT16-SSRP1 complex composed of SSRP1, SUPT16H, CSNK2A1, CSNK2A2 and CSNK2B, which forms following UV irradiation. Interacts with RNPS1. Interacts with SNAI1. Interacts with PML. Interacts with CCAR2. Interacts with HIRIP3. In terms of processing, phosphorylated at Thr-344, Thr-360, Ser-362 and Ser-370 by CDK1 in prophase and metaphase and dephosphorylated during anaphase. Phosphorylation does not directly affect casein kinase 2 activity, but may contribute to its regulation by forming binding sites for interacting proteins and/or targeting it to different compartments.

Its subcellular location is the nucleus. The enzyme catalyses L-seryl-[protein] + ATP = O-phospho-L-seryl-[protein] + ADP + H(+). It carries out the reaction L-threonyl-[protein] + ATP = O-phospho-L-threonyl-[protein] + ADP + H(+). Its activity is regulated as follows. Constitutively active protein kinase whose activity is not directly affected by phosphorylation. Seems to be regulated by level of expression and localization. Catalytic subunit of a constitutively active serine/threonine-protein kinase complex that phosphorylates a large number of substrates containing acidic residues C-terminal to the phosphorylated serine or threonine. Regulates numerous cellular processes, such as cell cycle progression, apoptosis and transcription, as well as viral infection. May act as a regulatory node which integrates and coordinates numerous signals leading to an appropriate cellular response. During mitosis, functions as a component of the p53/TP53-dependent spindle assembly checkpoint (SAC) that maintains cyclin-B-CDK1 activity and G2 arrest in response to spindle damage. Also required for p53/TP53-mediated apoptosis, phosphorylating 'Ser-392' of p53/TP53 following UV irradiation. Phosphorylates a number of DNA repair proteins in response to DNA damage, such as MDC1, MRE11, RAD9A, RAD51 and HTATSF1, promoting their recruitment to DNA damage sites. Can also negatively regulate apoptosis. Phosphorylates the caspases CASP9 and CASP2 and the apoptotic regulator NOL3. Phosphorylation protects CASP9 from cleavage and activation by CASP8, and inhibits the dimerization of CASP2 and activation of CASP8. Phosphorylates YY1, protecting YY1 from cleavage by CASP7 during apoptosis. Regulates transcription by direct phosphorylation of RNA polymerases I, II, III and IV. Also phosphorylates and regulates numerous transcription factors including NF-kappa-B, STAT1, CREB1, IRF1, IRF2, ATF1, ATF4, SRF, MAX, JUN, FOS, MYC and MYB. Phosphorylates Hsp90 and its co-chaperones FKBP4 and CDC37, which is essential for chaperone function. Mediates sequential phosphorylation of FNIP1, promoting its gradual interaction with Hsp90, leading to activate both kinase and non-kinase client proteins of Hsp90. Regulates Wnt signaling by phosphorylating CTNNB1 and the transcription factor LEF1. Acts as an ectokinase that phosphorylates several extracellular proteins. Phosphorylates PML at 'Ser-565' and primes it for ubiquitin-mediated degradation. Plays an important role in the circadian clock function by phosphorylating BMAL1 at 'Ser-90' which is pivotal for its interaction with CLOCK and which controls CLOCK nuclear entry. Phosphorylates FMR1, promoting FMR1-dependent formation of a membraneless compartment. May phosphorylate histone H2A on 'Ser-1'. The sequence is that of Casein kinase II subunit alpha (Csnk2a1) from Mus musculus (Mouse).